A 166-amino-acid chain; its full sequence is Interferon gamma (166 aa).

A signal peptide spans 1-23 (MNYTSYILAFQLCVILCSSGYYC). Glutamine 24 is modified (pyrrolidone carboxylic acid). N-linked (GlcNAc...) asparagine glycosylation is found at asparagine 39 and asparagine 106.

This sequence belongs to the type II (or gamma) interferon family. In terms of assembly, homodimer. Interacts with IFNGR1 (via extracellular domain); this interaction promotes IFNGR1 dimerization. Released primarily from activated T lymphocytes.

It localises to the secreted. Its function is as follows. Type II interferon produced by immune cells such as T-cells and NK cells that plays crucial roles in antimicrobial, antiviral, and antitumor responses by activating effector immune cells and enhancing antigen presentation. Primarily signals through the JAK-STAT pathway after interaction with its receptor IFNGR1 to affect gene regulation. Upon IFNG binding, IFNGR1 intracellular domain opens out to allow association of downstream signaling components JAK2, JAK1 and STAT1, leading to STAT1 activation, nuclear translocation and transcription of IFNG-regulated genes. Many of the induced genes are transcription factors such as IRF1 that are able to further drive regulation of a next wave of transcription. Plays a role in class I antigen presentation pathway by inducing a replacement of catalytic proteasome subunits with immunoproteasome subunits. In turn, increases the quantity, quality, and repertoire of peptides for class I MHC loading. Increases the efficiency of peptide generation also by inducing the expression of activator PA28 that associates with the proteasome and alters its proteolytic cleavage preference. Up-regulates as well MHC II complexes on the cell surface by promoting expression of several key molecules such as cathepsins B/CTSB, H/CTSH, and L/CTSL. Participates in the regulation of hematopoietic stem cells during development and under homeostatic conditions by affecting their development, quiescence, and differentiation. The sequence is that of Interferon gamma (IFNG) from Ailuropoda melanoleuca (Giant panda).